We begin with the raw amino-acid sequence, 571 residues long: Pectinesterase/pectinesterase inhibitor (571 aa).

Residues 27-178 (NSHQKAVESL…KILSSNAIDI (152 aa)) are pectinesterase inhibitor. The interval 233 to 254 (AQAGRPGAPADEGIGEGGGGGG) is disordered. The pectinesterase stretch occupies residues 259–558 (THVVAKDGSG…TVANWLTPAN (300 aa)). Residues threonine 336 and glutamine 366 each coordinate substrate. Aspartate 389 acts as the Proton donor; for pectinesterase activity in catalysis. Aspartate 410 acts as the Nucleophile; for pectinesterase activity in catalysis. Substrate-binding residues include arginine 479 and tryptophan 481.

In the N-terminal section; belongs to the PMEI family. This sequence in the C-terminal section; belongs to the pectinesterase family.

It localises to the secreted. The protein localises to the cell wall. The enzyme catalyses [(1-&gt;4)-alpha-D-galacturonosyl methyl ester](n) + n H2O = [(1-&gt;4)-alpha-D-galacturonosyl](n) + n methanol + n H(+). The protein operates within glycan metabolism; pectin degradation; 2-dehydro-3-deoxy-D-gluconate from pectin: step 1/5. Functionally, acts in the modification of cell walls via demethylesterification of cell wall pectin. This is Pectinesterase/pectinesterase inhibitor from Brassica campestris (Field mustard).